A 161-amino-acid chain; its full sequence is MASERKTKLSKNLLRMKFMQRGLDSETKKQLEEEERKMISDEHWYLDLPELKEKESFIVEEQSFSLCEDLLYGRMSFRGFNPEVEKLMLQMNSKNRAEAAEEDETVEVDVSDEEMARRYETLVGTIGKKFVKKRDRANYEEDENGTIKAIKPKKMFLKPQD.

Glycyl lysine isopeptide (Lys-Gly) (interchain with G-Cter in SUMO2) cross-links involve residues Lys37 and Lys86. At Ser111 the chain carries Phosphoserine. The Nuclear localization signal motif lies at 117 to 134 (RRYETLVGTIGKKFVKKR). Glycyl lysine isopeptide (Lys-Gly) (interchain with G-Cter in SUMO2) cross-links involve residues Lys128, Lys151, and Lys154.

Belongs to the MPP6 family. As to quaternary structure, associates with the RNA exosome complex, mediated by EXOSC3. Interacts with ARHGAP18. Interacts with exosome cofactors EXOSC10 and MTREX. In terms of processing, phosphorylated in M (mitotic) phase.

It localises to the nucleus. It is found in the nucleolus. The protein localises to the cytoplasm. Functionally, RNA-binding protein that associates with the RNA exosome complex. Involved in the 3'-processing of the 7S pre-RNA to the mature 5.8S rRNA and plays a role in recruiting the RNA exosome complex to pre-rRNA; this function may include C1D. The sequence is that of M-phase phosphoprotein 6 from Mus musculus (Mouse).